The sequence spans 719 residues: MQYSIEINKNTEIFDIDKVAKQAAGAVLMRQGKSIVLATVAREEKQVEEDFLPLTVQYIEKAYAAGKIPGGYVKRETKPSDAETLTARIIDRSLRPLFPKGYAYPTQIVVMVLSADPKVDLQVMSLNAASVALYLSDIPMKAPVCGVRIGKIDGNFILNPNNEELQNSTLDLYVAGVKDELLMIEMRALPDQKENEIFIEAPYADVLTQTTSQNMNELSEDEILEALNLAQKAILNGSNAYEEAFSKHKKNSQIELKNEIEHPEILAFIENNFQKQIKEAINQMAKSERASELNKIAKEILNLEITKDWSEESVLNTLAKVKRKLIREQILNEGKRADGRSLNEVRPISIETNILPNAHGSCLFTRGQTQALVVATLGGENDAQMIDLLTEKNPISERFMVNYNFPGFSVGEASPIKAPGRRELGHGNLAKRALYPSVDENYPYIIRLVSEILESNGSSSMATVCGGSLALKAAGVPSLKLVAGVAMGLIFEDNKHAVLTDIMGLEDHDGDMDFKVAGSKDGVTALQMDIKLGGIDQETLKQALYQAKEGRIHILNIMEEAAKEIIVNEEVLPKLELFSVDPSKIVDIIGQAGKTIKEIIEKFGVSIDLDREKGEVKIAGSQNEQIKAAKDYIINITSSQKGTKKGSKDKDISGFELGQEFQGIVKKIAPFGAFVELKNGVDGLLHSSKSKHLNLSENQSLKVKISEIKNGKISVDLCE.

Mg(2+) is bound by residues aspartate 507 and aspartate 513. Residues 573 to 633 (PKLELFSVDP…EQIKAAKDYI (61 aa)) form the KH domain. One can recognise an S1 motif domain in the interval 658 to 719 (GQEFQGIVKK…NGKISVDLCE (62 aa)).

This sequence belongs to the polyribonucleotide nucleotidyltransferase family. The cofactor is Mg(2+).

The protein localises to the cytoplasm. The enzyme catalyses RNA(n+1) + phosphate = RNA(n) + a ribonucleoside 5'-diphosphate. Its function is as follows. Involved in mRNA degradation. Catalyzes the phosphorolysis of single-stranded polyribonucleotides processively in the 3'- to 5'-direction. The polypeptide is Polyribonucleotide nucleotidyltransferase (Campylobacter jejuni subsp. jejuni serotype O:23/36 (strain 81-176)).